Consider the following 755-residue polypeptide: MSQTLKKRGGNSSGRKSPTTSNIEFDDKKTEFDLNAIVPPKEPEYKYLAALTLVTLLAIYTRFTKLGTPNKVVFDEVHFGKFASYYLERTYFFDLHPPFAKLLIAFVGWLIGYDGKFKFEAIGDSYIENNVPYIAYRSLSAIQGAAIVPIMFLTMKTLGFSVAACLFSSIIVCFDNAQVTDSRLILLDATLILSVALTIFSYSKFSTFRKQSFSSKWWTWLLATGVSLSCVISTKYVGVFTYLTIGIAVIHELWILLDYRKGLTLQEFAKHFFARLWALIIVPFCIYLYWFYLHFAILTRSGPGDAFMSSEFQETLLESPLAAHSKPVQYFDQITIKHKDTGAFLHSHQHEYPLRYEDGRISSNGQQVTCVVQENAANDPNNQWEIVPTSEGANKGTKVYTNDIVRFRHVGTGGYLLTHDVASPLKPTNEEFTVVYDDVAQQRYNETLFRLRLHVPGSNPKKEKNKKEIKTLATDLRILHVDTVVAMWTHNDELLPEWAFNQQEVSGNKKIPDKDNIWNFDLITNLQSTDPRNQYVPKKVKTLPFLRKWWELQMLMFHHNNQLSSEHPFATQPGEWPLALSGVSFYNDNTEKKQIFFIGNIIGFWLEVCFLSIYIGILLADQITRRRNVHVLSDRARSRLYNTLGFLFVGWAAHYLPFFLMNRQKFLHHYLPAHLVAALFSGGLVEFICSNNSARPNGKPVGVNKYKIIAVVAACSTAIIWFFFYFRPLTYGDVYLTPEEVKARQWLDIKLHYGK.

Residues 1-23 are disordered; sequence MSQTLKKRGGNSSGRKSPTTSNI. Asn11 carries N-linked (GlcNAc...) asparagine glycosylation. Residues 13–23 are compositionally biased toward polar residues; the sequence is SGRKSPTTSNI. 6 helical membrane-spanning segments follow: residues 92 to 112, 147 to 167, 185 to 205, 212 to 232, 237 to 257, and 278 to 298; these read FFDL…WLIG, IVPI…ACLF, ILLD…YSKF, SFSS…SCVI, VGVF…WILL, and ALII…FAIL. 3 MIR domains span residues 325 to 389, 396 to 454, and 466 to 523; these read SKPV…IVPT, GTKV…LRLH, and KKEI…FDLI. The N-linked (GlcNAc...) asparagine glycan is linked to Asn445. 3 helical membrane passes run 595-615, 640-660, and 670-690; these read IFFI…SIYI, LYNT…PFFL, and YLPA…FICS. Residue Asn691 is glycosylated (N-linked (GlcNAc...) asparagine). The helical transmembrane segment at 706–726 threads the bilayer; that stretch reads YKIIAVVAACSTAIIWFFFYF.

The protein belongs to the glycosyltransferase 39 family. In terms of assembly, forms a functional homodimer.

The protein localises to the endoplasmic reticulum membrane. The enzyme catalyses a di-trans,poly-cis-dolichyl beta-D-mannosyl phosphate + L-seryl-[protein] = 3-O-(alpha-D-mannosyl)-L-seryl-[protein] + a di-trans,poly-cis-dolichyl phosphate + H(+). It carries out the reaction a di-trans,poly-cis-dolichyl beta-D-mannosyl phosphate + L-threonyl-[protein] = 3-O-(alpha-D-mannosyl)-L-threonyl-[protein] + a di-trans,poly-cis-dolichyl phosphate + H(+). It functions in the pathway protein modification; protein glycosylation. In terms of biological role, protein mannosyltransferase (PMT) involved in hyphal growth and drug sensitivity. Transfers mannose from Dol-P-mannose to Ser or Thr residues on proteins. PMT1, PMT2 and PMT4 account for most of the protein-O-glycosylation activity, while PMT5 and PMT6 may specifically modulate a much narrower spectrum of target proteins. Accounts for the O-glycosylation of AXL2, responsible for bud site selection, as well as of the SEC20 t-SNARE component. O-glycosylation of SEC20 is essential for its stability. Required for biofilm formation. In Candida albicans (strain SC5314 / ATCC MYA-2876) (Yeast), this protein is Dolichyl-phosphate-mannose--protein mannosyltransferase 4.